The sequence spans 353 residues: Cytochrome bc1 complex Rieske iron-sulfur subunit (353 aa).

A disordered region spans residues 1–51 (MSSQDIPEENLPAEQDRPHGAAARPADETNPFADPGLPPHEPRVQDVDERA). Residues 40–51 (HEPRVQDVDERA) are compositionally biased toward basic and acidic residues. 3 helical membrane-spanning segments follow: residues 60–80 (ALLF…FVAI), 99–119 (FALG…AVHW), and 164–184 (LIRN…VVLL). The Rieske domain occupies 246–336 (KAALMIIRLE…IGVNDEGYLE (91 aa)). [2Fe-2S] cluster-binding residues include Cys-279, His-281, Cys-298, and His-301. The cysteines at positions 284 and 300 are disulfide-linked.

Belongs to the Rieske iron-sulfur protein family. As to quaternary structure, the cytochrome bc1 complex is composed of a cytochrome b (QcrB), the Rieske iron-sulfur protein (QcrA) and a diheme cytochrome c (QcrC) subunit. [2Fe-2S] cluster is required as a cofactor.

The protein localises to the cell membrane. Iron-sulfur subunit of the cytochrome bc1 complex, an essential component of the respiratory electron transport chain required for ATP synthesis. The bc1 complex catalyzes the oxidation of menaquinol and the reduction of cytochrome c in the respiratory chain. The bc1 complex operates through a Q-cycle mechanism that couples electron transfer to generation of the proton gradient that drives ATP synthesis. In Streptomyces coelicolor (strain ATCC BAA-471 / A3(2) / M145), this protein is Cytochrome bc1 complex Rieske iron-sulfur subunit (qcrA).